The sequence spans 298 residues: ATP synthase gamma chain (298 aa).

Belongs to the ATPase gamma chain family. F-type ATPases have 2 components, CF(1) - the catalytic core - and CF(0) - the membrane proton channel. CF(1) has five subunits: alpha(3), beta(3), gamma(1), delta(1), epsilon(1). CF(0) has three main subunits: a, b and c.

The protein localises to the cell inner membrane. Functionally, produces ATP from ADP in the presence of a proton gradient across the membrane. The gamma chain is believed to be important in regulating ATPase activity and the flow of protons through the CF(0) complex. The sequence is that of ATP synthase gamma chain from Wolinella succinogenes (strain ATCC 29543 / DSM 1740 / CCUG 13145 / JCM 31913 / LMG 7466 / NCTC 11488 / FDC 602W) (Vibrio succinogenes).